The sequence spans 128 residues: Cholecystokinin B (128 aa).

A signal peptide spans 1 to 20; that stretch reads MCSGVCICLLLAMLSASSKA. Positions 21 to 108 are excised as a propeptide; the sequence is HQATGSLGED…FDQSHRINDR (88 aa). The segment at 47 to 67 is disordered; that stretch reads YARASSAGQKKSFQRTDGDQR. Tyr110 carries the post-translational modification Sulfotyrosine. The residue at position 116 (Phe116) is a Phenylalanine amide. Residues 120–128 constitute a propeptide that is removed on maturation; it reads SAEEYEYSS.

The protein belongs to the gastrin/cholecystokinin family. In terms of processing, the precursor is cleaved by proteases to produce a number of active cholecystokinins. As to expression, brain and gastrointestinal tract.

The protein resides in the secreted. This chain is Cholecystokinin B (cck-b), found in Xenopus laevis (African clawed frog).